The sequence spans 980 residues: MMKPSIAEMLHRGRMLWIILLSTIALGWTTPIPLIEDSEEIDEPCFDPCYCEVKESLFHIHCDSKGFTNISQITEFWSRPFKLYLQRNSMRRLYTNSFLHLNNAVSINLGNNALQDIQTGAFNGLKILKRLYLHENKLDVFRNDTFLGLESLEYLQADYNVIKRIESGAFRNLSKLRVLILNDNLIPVLPTNLFKAVSLTHLDLRGNRLKVLFYRGMLDHIGRSLMELQLEENPWNCTCEIVQLKSWLERIPYTALVGDITCETPFHFHGKDLREIKKTELCPLLSDSEVEASLGIPHLSSSKENAWPTKPSSMLSSVHFTASSVEYKSSNKQPKPTKQPRTPRPPSTSQALYPGPNQPPIAPYQTRPPIPIICPTGCTCNLHINDLGLTVNCKERGFNNISELLPRPLNAKKLYLSSNLIQKIYRSDFWNFSSLDLLHLGNNRISYVQDGAFINLPNLKSLFLNGNDIEKLTPGMFRGLQSLHYLYFEFNVIREIQPAAFSLMPNLKLLFLNNNLLRTLPTDAFAGTSLARLNLRKNYFLYLPVAGVLEHLNAIVQIDLNENPWDCTCDLVPFKQWIETISSVSVVGDVLCRTPENLTHRDVRTIELEVLCPEMLHIAQPGPSPPQPGDYHPNGGPTSASPYEFSPPGGPVPLSVLILSLLVLFFSAVFVAAGLFAYVLRRRRKKLPFRSKRQEGVDLTGIQMQCHRLFEDSGGNSGGSGGGGRPTLSSPEKAPPVGHVYEYIPHPVTQMCNNPIYKPREEEEVAASAAQDTGATDRGGPGTQPTGMAEVLLGSEQFAETPKENHSNYRTLLEKEKEWALAVSNSQLNTIVTVNHHHPHPHHSAVGGVSGVGGGTGGDLAGFRHHEKNGGVVLFPPGGGCGGGSLLLDRERPQPAPCTVGFVDCLYGTVPKLKELHVHPPGMQYPDLQQDARLKETLLFSAGKGFTDHQTPKSDYLDLRAKLQTKPDYLEVLEKTAYRF.

A signal peptide spans 1–27; that stretch reads MMKPSIAEMLHRGRMLWIILLSTIALG. Topologically, residues 30–655 are extracellular; the sequence is TPIPLIEDSE…SPPGGPVPLS (626 aa). Residue Asn69 is glycosylated (N-linked (GlcNAc...) asparagine). LRR repeat units follow at residues 79–100, 103–124, 127–148, 151–172, 175–196, and 198–219; these read RPFK…SFLH, NAVS…AFNG, ILKR…TFLG, SLEY…AFRN, KLRV…LFKA, and SLTH…GMLD. The LRRCT 1 domain occupies 233 to 284; sequence NPWNCTCEIVQLKSWLERIPYTALVGDITCETPFHFHGKDLREIKKTELCPL. The disordered stretch occupies residues 326–361; the sequence is EYKSSNKQPKPTKQPRTPRPPSTSQALYPGPNQPPI. The region spanning 365–407 is the LRRNT domain; that stretch reads QTRPPIPIICPTGCTCNLHINDLGLTVNCKERGFNNISELLPR. LRR repeat units lie at residues 410–431, 434–455, 458–479, 482–503, 506–527, and 529–550; these read NAKK…DFWN, SLDL…AFIN, NLKS…MFRG, SLHY…AFSL, NLKL…AFAG, and SLAR…GVLE. One can recognise an LRRCT 2 domain in the interval 563–614; the sequence is NPWDCTCDLVPFKQWIETISSVSVVGDVLCRTPENLTHRDVRTIELEVLCPE. Asn597 carries N-linked (GlcNAc...) asparagine glycosylation. Residues 622-644 are disordered; it reads GPSPPQPGDYHPNGGPTSASPYE. Residues 656–676 form a helical membrane-spanning segment; it reads VLILSLLVLFFSAVFVAAGLF. Topologically, residues 677–980 are cytoplasmic; sequence AYVLRRRRKK…EVLEKTAYRF (304 aa). 2 disordered regions span residues 709–735 and 762–785; these read LFED…EKAP and EEEV…GTQP. Over residues 715–725 the composition is skewed to gly residues; the sequence is GNSGGSGGGGR.

It belongs to the SLITRK family. As to expression, broadly expressed in embryonic brain with highest expression in cortical plate, pyramidal cell layer of the hippocampus, thalamus and hypothalamus.

The protein resides in the membrane. In terms of biological role, suppresses neurite outgrowth. The polypeptide is SLIT and NTRK-like protein 3 (Slitrk3) (Mus musculus (Mouse)).